Consider the following 1334-residue polypeptide: Putative transmembrane protein ORF1334 (1334 aa).

Residues 53-73 traverse the membrane as a helical segment; that stretch reads VSIVVLVLTLFIIPVIIPPAH. Positions 1107 to 1135 are disordered; the sequence is LSASTTPPSSTTPTPPSSSSSSSSSSSIS. Low complexity predominate over residues 1110-1135; it reads STTPPSSTTPTPPSSSSSSSSSSSIS. Transmembrane regions (helical) follow at residues 1256–1276, 1292–1312, and 1313–1333; these read AVLPPIYALPLFLLFAGSFFI, IIYIFFVAPFLIVIGIPTSVV, and YGTVVGALIIIIIGLWASRSQ.

It localises to the host membrane. The sequence is that of Putative transmembrane protein ORF1334 from Acidianus two-tailed virus (ATV).